The sequence spans 202 residues: Orotate phosphoribosyltransferase (202 aa).

Residues K93 and 113-121 (EDIITTGGS) contribute to the 5-phospho-alpha-D-ribose 1-diphosphate site. Residues T117 and R145 each coordinate orotate.

This sequence belongs to the purine/pyrimidine phosphoribosyltransferase family. PyrE subfamily. Homodimer. The cofactor is Mg(2+).

It catalyses the reaction orotidine 5'-phosphate + diphosphate = orotate + 5-phospho-alpha-D-ribose 1-diphosphate. It functions in the pathway pyrimidine metabolism; UMP biosynthesis via de novo pathway; UMP from orotate: step 1/2. Its function is as follows. Catalyzes the transfer of a ribosyl phosphate group from 5-phosphoribose 1-diphosphate to orotate, leading to the formation of orotidine monophosphate (OMP). In Campylobacter hominis (strain ATCC BAA-381 / DSM 21671 / CCUG 45161 / LMG 19568 / NCTC 13146 / CH001A), this protein is Orotate phosphoribosyltransferase.